Reading from the N-terminus, the 163-residue chain is Large ribosomal subunit protein bL19 (163 aa).

Over residues 131–150 (ISQERKASGKDQASKPEVRP) the composition is skewed to basic and acidic residues. A disordered region spans residues 131-163 (ISQERKASGKDQASKPEVRPQGKKPAPKPKAKK). Positions 151–163 (QGKKPAPKPKAKK) are enriched in basic residues.

It belongs to the bacterial ribosomal protein bL19 family.

This protein is located at the 30S-50S ribosomal subunit interface and may play a role in the structure and function of the aminoacyl-tRNA binding site. In Rhodospirillum rubrum (strain ATCC 11170 / ATH 1.1.1 / DSM 467 / LMG 4362 / NCIMB 8255 / S1), this protein is Large ribosomal subunit protein bL19.